The primary structure comprises 354 residues: Sorbitol dehydrogenase (354 aa).

A Zn(2+)-binding site is contributed by Cys-43. Position 49 (Tyr-49) interacts with substrate. His-67 and Glu-68 together coordinate Zn(2+). Glu-153 contributes to the substrate binding site. Positions 181, 201, and 206 each coordinate NAD(+). 2 positions are modified to phosphoserine: Ser-208 and Ser-222. Residues 270 to 272 (VGL) and 294 to 296 (VFR) contribute to the NAD(+) site. The substrate site is built by Arg-296 and Tyr-297.

It belongs to the zinc-containing alcohol dehydrogenase family. Homotetramer. Zn(2+) is required as a cofactor. In terms of tissue distribution, expressed in liver.

Its subcellular location is the mitochondrion membrane. It is found in the cell projection. It localises to the cilium. The protein resides in the flagellum. The catalysed reaction is xylitol + NAD(+) = D-xylulose + NADH + H(+). It carries out the reaction L-iditol + NAD(+) = keto-L-sorbose + NADH + H(+). The enzyme catalyses keto-D-fructose + NADH + H(+) = D-sorbitol + NAD(+). Its function is as follows. Polyol dehydrogenase that catalyzes the reversible NAD(+)-dependent oxidation of various sugar alcohols. Is mostly active with xylitol, L-iditol and D-sorbitol (D-glucitol) as substrates, leading to the C2-oxidized products D-xylulose, L-sorbose and D-fructose, respectively. Is a key enzyme in the polyol pathway that interconverts glucose and fructose via sorbitol, which constitutes an important alternate route for glucose metabolism. May play a role in sperm motility by using sorbitol as an alternative energy source for sperm motility. This is Sorbitol dehydrogenase (SORD) from Ovis aries (Sheep).